We begin with the raw amino-acid sequence, 202 residues long: Protein GrpE (202 aa).

A compositionally biased stretch (basic and acidic residues) spans 21 to 37; the sequence is EELKNEEVKEETHEHEH. The tract at residues 21–52 is disordered; the sequence is EELKNEEVKEETHEHEHKHGGHTCCGKHGHKH. Residues 38–51 show a composition bias toward basic residues; it reads KHGGHTCCGKHGHK.

Belongs to the GrpE family. As to quaternary structure, homodimer.

Its subcellular location is the cytoplasm. Participates actively in the response to hyperosmotic and heat shock by preventing the aggregation of stress-denatured proteins, in association with DnaK and GrpE. It is the nucleotide exchange factor for DnaK and may function as a thermosensor. Unfolded proteins bind initially to DnaJ; upon interaction with the DnaJ-bound protein, DnaK hydrolyzes its bound ATP, resulting in the formation of a stable complex. GrpE releases ADP from DnaK; ATP binding to DnaK triggers the release of the substrate protein, thus completing the reaction cycle. Several rounds of ATP-dependent interactions between DnaJ, DnaK and GrpE are required for fully efficient folding. The chain is Protein GrpE from Fusobacterium nucleatum subsp. polymorphum (Fusobacterium polymorphum).